The following is a 219-amino-acid chain: MEKKITGYTTVDISQWHRKEHFEAFQSVAQCTYNQTVQLDITAFLKTVKKNKHKFYPAFIHILARLMNAHPEFRMAMKDGELVIWDSVHPCYTVFHEQTETFSSLWSEYHDDFRQFLHIYSQDVACYGENLAYFPKGFIENMFFVSANPWVSFTSFDLNVANMDNFFAPVFTMGKYYTQGDKVLMPLAIQVHHAVCDGFHVGRMLNELQQYCDEWQGGA.

Residue His193 is the Proton acceptor of the active site.

It belongs to the chloramphenicol acetyltransferase family.

The enzyme catalyses chloramphenicol + acetyl-CoA = chloramphenicol 3-acetate + CoA. In terms of biological role, this enzyme is an effector of chloramphenicol resistance in bacteria. The chain is Chloramphenicol acetyltransferase (cat) from Acinetobacter calcoaceticus subsp. anitratus.